We begin with the raw amino-acid sequence, 473 residues long: Photosystem II CP43 reaction center protein (473 aa).

Residues 1 to 14 constitute a propeptide that is removed on maturation; sequence MKTLYSLRRYFHVE. Position 15 is an N-acetylthreonine (Thr-15). Thr-15 bears the Phosphothreonine mark. 5 helical membrane-spanning segments follow: residues 69–93, 134–155, 178–200, 255–275, and 291–312; these read LFEVAHFVPEKPMYEQGLILLPHLA, LIGPETLEESYPFFGYLWKDKN, KAMYFGGVYDTWAPGGGDVRVIS, KPFAWARRAFVWSGEAYLSYS, and WFNNTVYPSEFFGPTGPEASQA. Residue Glu-367 coordinates [CaMn4O5] cluster. The helical transmembrane segment at 447–471 threads the bilayer; it reads RARAAAAGFEKGIDRDTEPVLSMRP.

It belongs to the PsbB/PsbC family. PsbC subfamily. In terms of assembly, PSII is composed of 1 copy each of membrane proteins PsbA, PsbB, PsbC, PsbD, PsbE, PsbF, PsbH, PsbI, PsbJ, PsbK, PsbL, PsbM, PsbT, PsbX, PsbY, PsbZ, Psb30/Ycf12, at least 3 peripheral proteins of the oxygen-evolving complex and a large number of cofactors. It forms dimeric complexes. Binds multiple chlorophylls and provides some of the ligands for the Ca-4Mn-5O cluster of the oxygen-evolving complex. It may also provide a ligand for a Cl- that is required for oxygen evolution. PSII binds additional chlorophylls, carotenoids and specific lipids. serves as cofactor.

The protein resides in the plastid. Its subcellular location is the chloroplast thylakoid membrane. Functionally, one of the components of the core complex of photosystem II (PSII). It binds chlorophyll and helps catalyze the primary light-induced photochemical processes of PSII. PSII is a light-driven water:plastoquinone oxidoreductase, using light energy to abstract electrons from H(2)O, generating O(2) and a proton gradient subsequently used for ATP formation. This is Photosystem II CP43 reaction center protein from Ostreococcus tauri.